Consider the following 300-residue polypeptide: Ribosome-inactivating protein 3 (300 aa).

The active site involves Glu207.

Belongs to the ribosome-inactivating protein family. Type 1 RIP subfamily. Monomer. As to expression, accumulates to high levels in seeds.

It localises to the cytoplasm. The catalysed reaction is Endohydrolysis of the N-glycosidic bond at one specific adenosine on the 28S rRNA.. Possesses features of some constitutive defense agent. The coordinate Opaque-2-controlled synthesis of this protein and the major seed storage proteins (zeins) may provide the germinating seedling with both nutritional benefits and protection against pathogen invasion of the surrounding endosperm. The sequence is that of Ribosome-inactivating protein 3 (CRIP3) from Zea mays (Maize).